The sequence spans 623 residues: UvrABC system protein C (623 aa).

The GIY-YIG domain occupies 12–91 (PSPGVYLMKS…IKQHRPKYNI (80 aa)). The UVR domain maps to 201 to 236 (TEVARLYRSKMNLAAEQMRYEDAARYRDLLRAIEVT). The interval 603-623 (RLHGSPLPNPPPPGEGAMDRK) is disordered.

It belongs to the UvrC family. As to quaternary structure, interacts with UvrB in an incision complex.

The protein resides in the cytoplasm. Its function is as follows. The UvrABC repair system catalyzes the recognition and processing of DNA lesions. UvrC both incises the 5' and 3' sides of the lesion. The N-terminal half is responsible for the 3' incision and the C-terminal half is responsible for the 5' incision. The chain is UvrABC system protein C from Citrifermentans bemidjiense (strain ATCC BAA-1014 / DSM 16622 / JCM 12645 / Bem) (Geobacter bemidjiensis).